We begin with the raw amino-acid sequence, 1337 residues long: Partitioning defective 3 homolog (1337 aa).

A Phosphoserine modification is found at Ser-25. 2 disordered regions span residues 81-109 (EQDP…SELG) and 143-263 (SSDP…LENM). Position 91 is a phosphothreonine (Thr-91). Positions 91 to 100 (TSASSTGTQS) are enriched in low complexity. 2 stretches are compositionally biased toward polar residues: residues 150 to 163 (GLST…FSSE) and 171 to 188 (TRWS…TGSP). Ser-156 and Ser-174 each carry phosphoserine. Basic and acidic residues predominate over residues 190 to 203 (TCDRKKDENYRSLP). Polar residues predominate over residues 207-224 (SSWSNQFQRDNARSSLSA). Positions 271–359 (MVKLVQVPND…ARVIWFHVVP (89 aa)) constitute a PDZ 1 domain. Ser-383 carries the phosphoserine modification. The tract at residues 397–441 (NAPQALPRAPRLSQPPEQLDAHPRLPHSAHASTKPPTAPALAPPN) is disordered. PDZ domains follow at residues 461 to 546 (NIQL…LVFR) and 590 to 677 (EVPL…GMIQ). Tyr-489 carries the phosphotyrosine modification. Ser-692, Ser-695, Ser-715, Ser-728, Ser-809, and Ser-827 each carry phosphoserine. The interaction with PRKCI and PRKCZ stretch occupies residues 712-936 (RRISHSLYSG…AAIDKSYDKP (225 aa)). Residue Lys-834 is modified to N6-acetyllysine. At Ser-837 the chain carries Phosphoserine. An N6-acetyllysine modification is found at Lys-851. 2 positions are modified to phosphoserine: Ser-852 and Ser-873. Disordered regions lie at residues 866–888 (VDDQ…KKSS), 932–1015 (SYDK…AKKG), 1028–1055 (KHRK…DRVR), 1110–1271 (LNAR…LGGH), and 1284–1337 (LLRQ…PFYS). Lys-885 carries the N6-acetyllysine modification. The interval 935 to 1337 (KPMVDDDDEG…TPEKGRPFYS (403 aa)) is interaction with FRMD4A. Acidic residues predominate over residues 939-953 (DDDDEGMETLEEDTE). Residue Ser-962 is modified to Phosphoserine; by AURKA. Phosphoserine occurs at positions 971 and 973. Basic and acidic residues-rich tracts occupy residues 981–1009 (DPEK…EKDK) and 1030–1043 (RKDD…RIKI). Ser-1046 carries the post-translational modification Phosphoserine. The stretch at 1050 to 1082 (EEDRVRMKEEQERIQAKTREFRERQARERDYAE) forms a coiled coil. Over residues 1138–1147 (PGDSNRSTPS) the composition is skewed to polar residues. Positions 1148–1175 (NHDRIQRLRQEFQQAKQDEDVEDRRRTY) are enriched in basic and acidic residues. Coiled-coil stretches lie at residues 1149 to 1172 (HDRI…EDRR), 1199 to 1222 (VQVQ…YSSL), and 1278 to 1299 (MLET…LKKQ). Residues 1180–1203 (SWSSSRPASQSGRHSVSVEVQVQR) are compositionally biased toward low complexity. The segment covering 1219–1240 (YSSLPRQSRKNASSVSQDSWEQ) has biased composition (polar residues). Positions 1284–1296 (LLRQEQRRKEQQL) are enriched in basic and acidic residues. Positions 1318 to 1327 (SQVARLNRLQ) are enriched in polar residues. Basic and acidic residues predominate over residues 1328-1337 (TPEKGRPFYS). Lys-1331 bears the N6-acetyllysine mark.

It belongs to the PAR3 family. In terms of assembly, component of a complex whose core is composed of ARHGAP17, AMOT, PALS1, PATJ and PARD3/PAR3. Interacts (via PDZ 1 domain) with PARD6A, PARD6B and F11R/JAM1. Interacts with AURKA, AURKB and SIRT2. Interacts with PRKCI. Interacts with PRKCZ. Part of a complex with PARD6A or PARD6B, PRKCI or PRKCZ and CDC42 or RAC1. Interacts with LIMK2 and CDH5. Component of the Par polarity complex, composed of at least phosphorylated PRKCZ, PARD3 and TIAM1. Directly interacts with TIAM1 and TIAM2. Interacts with ECT2 and FBF1. Interacts (via PDZ 3 domain) with PTEN (via C-terminus). Interacts (via coiled-coil domain) with FRMD4A. Found in a complex with PARD3, CYTH1 and FRMD4A. Interacts with SAPCD2. Interacts with PRKCA. As to quaternary structure, interacts with PRKCZ. In terms of processing, acetylated. Deacetylated by SIRT2, thereby inhibiting Schwann cell peripheral myelination. Phosphorylation at Ser-827 by PRKCZ and PRKCI occurs at the most apical tip of epithelial cell-cell contacts during the initial phase of tight junction formation and may promote dissociation of the complex with PARD6. EGF-induced Tyr-1127 phosphorylation mediates dissociation from LIMK2. Phosphorylation by AURKA at Ser-962 is required for the normal establishment of neuronal polarity. Isoform 1 is predominantly expressed in lung, glandular stomach, prostate, ovary and uterus. Isoform 1 is also expressed in brain, with a high expression in the cortex, hippocampus and in the striatum. Isoform 2 is predominantly expressed in intestinal epithelial cells, kidney and prostate.

The protein localises to the cytoplasm. The protein resides in the endomembrane system. Its subcellular location is the cell junction. It is found in the tight junction. It localises to the adherens junction. The protein localises to the cell cortex. The protein resides in the cytoskeleton. Its subcellular location is the cell membrane. Adapter protein involved in asymmetrical cell division and cell polarization processes. Seems to play a central role in the formation of epithelial tight junctions. Association with PARD6B may prevent the interaction of PARD3 with F11R/JAM1, thereby preventing tight junction assembly. The PARD6-PARD3 complex links GTP-bound Rho small GTPases to atypical protein kinase C proteins. Required for establishment of neuronal polarity and normal axon formation in cultured hippocampal neurons. Involved in Schwann cell peripheral myelination. Targets the phosphatase PTEN to cell junctions. In Rattus norvegicus (Rat), this protein is Partitioning defective 3 homolog (Pard3).